The following is a 188-amino-acid chain: Elongation factor P (188 aa).

Residue Lys34 is modified to N6-(3,6-diaminohexanoyl)-5-hydroxylysine.

Belongs to the elongation factor P family. In terms of processing, may be beta-lysylated on the epsilon-amino group of Lys-34 by the combined action of EpmA and EpmB, and then hydroxylated on the C5 position of the same residue by EpmC (if this protein is present). Lysylation is critical for the stimulatory effect of EF-P on peptide-bond formation. The lysylation moiety may extend toward the peptidyltransferase center and stabilize the terminal 3-CCA end of the tRNA. Hydroxylation of the C5 position on Lys-34 may allow additional potential stabilizing hydrogen-bond interactions with the P-tRNA.

It is found in the cytoplasm. Its pathway is protein biosynthesis; polypeptide chain elongation. Functionally, involved in peptide bond synthesis. Alleviates ribosome stalling that occurs when 3 or more consecutive Pro residues or the sequence PPG is present in a protein, possibly by augmenting the peptidyl transferase activity of the ribosome. Modification of Lys-34 is required for alleviation. The protein is Elongation factor P of Xylella fastidiosa (strain M23).